Here is a 28-residue protein sequence, read N- to C-terminus: Cyclotide vodo I1 (28 aa).

Disulfide bonds link C4/C18, C8/C20, and C13/C25.

This is a cyclic peptide. In terms of processing, contains 3 disulfide bonds.

Its function is as follows. Probably participates in a plant defense mechanism. This Viola odorata (Sweet violet) protein is Cyclotide vodo I1.